The primary structure comprises 155 residues: Large ribosomal subunit protein uL13 (155 aa).

Belongs to the universal ribosomal protein uL13 family. Part of the 50S ribosomal subunit.

This protein is one of the early assembly proteins of the 50S ribosomal subunit, although it is not seen to bind rRNA by itself. It is important during the early stages of 50S assembly. The sequence is that of Large ribosomal subunit protein uL13 from Rickettsia felis (strain ATCC VR-1525 / URRWXCal2) (Rickettsia azadi).